Reading from the N-terminus, the 114-residue chain is Fumarate reductase subunit D (114 aa).

A run of 3 helical transmembrane segments spans residues 25-45 (SGLA…FGII), 50-70 (IIAF…TIFP), and 94-114 (LIFY…VIAI).

This sequence belongs to the FrdD family. Part of an enzyme complex containing four subunits: a flavoprotein (FrdA), an iron-sulfur protein (FrdB), and two hydrophobic anchor proteins (FrdC and FrdD).

The protein resides in the cell inner membrane. Its function is as follows. Anchors the catalytic components of the fumarate reductase complex to the cell membrane, binds quinones. This chain is Fumarate reductase subunit D, found in Mannheimia succiniciproducens (strain KCTC 0769BP / MBEL55E).